Consider the following 89-residue polypeptide: RNA-binding protein Hfq (89 aa).

Positions 9 to 68 (EPFLNALRKEKVPVSIYLVNGIKLQGQIESFDQFVILLRNNVNQMVYKHAISTVVPARNV) constitute a Sm domain. A disordered region spans residues 70-89 (TAPPVPTETHAQSSEEFGNI). The segment covering 78-89 (THAQSSEEFGNI) has biased composition (polar residues).

This sequence belongs to the Hfq family. As to quaternary structure, homohexamer.

RNA chaperone that binds small regulatory RNA (sRNAs) and mRNAs to facilitate mRNA translational regulation in response to envelope stress, environmental stress and changes in metabolite concentrations. Also binds with high specificity to tRNAs. This is RNA-binding protein Hfq from Alkalilimnicola ehrlichii (strain ATCC BAA-1101 / DSM 17681 / MLHE-1).